The sequence spans 150 residues: Small ribosomal subunit protein uS11z (150 aa).

S19 carries the phosphoserine modification.

Belongs to the universal ribosomal protein uS11 family. As to quaternary structure, interacts with AAK6.

The protein resides in the cytoplasm. The chain is Small ribosomal subunit protein uS11z (RPS14A) from Arabidopsis thaliana (Mouse-ear cress).